We begin with the raw amino-acid sequence, 301 residues long: ATP synthase gamma chain (301 aa).

It belongs to the ATPase gamma chain family. F-type ATPases have 2 components, CF(1) - the catalytic core - and CF(0) - the membrane proton channel. CF(1) has five subunits: alpha(3), beta(3), gamma(1), delta(1), epsilon(1). CF(0) has three main subunits: a, b and c.

The protein resides in the cell inner membrane. Produces ATP from ADP in the presence of a proton gradient across the membrane. The gamma chain is believed to be important in regulating ATPase activity and the flow of protons through the CF(0) complex. The sequence is that of ATP synthase gamma chain from Helicobacter pylori (strain G27).